The following is a 319-amino-acid chain: Ficolin-2 (319 aa).

The N-terminal stretch at 1–22 (MVLGSAALFVLSLCVTELTLHA) is a signal peptide. The Collagen-like domain occupies 45–101 (GCPGLPGALGPKGEAGAKGDRGESGLPGHPGKAGPTGPKGDRGEKGVRGEKGDTGPS). Positions 53 to 106 (LGPKGEAGAKGDRGESGLPGHPGKAGPTGPKGDRGEKGVRGEKGDTGPSQSCAT) are disordered. Over residues 83-97 (KGDRGEKGVRGEKGD) the composition is skewed to basic and acidic residues. Residues 102–319 (QSCATGPRTC…KVSEMKVRLI (218 aa)) enclose the Fibrinogen C-terminal domain. 2 cysteine pairs are disulfide-bonded: C104–C132 and C111–C139. Ca(2+) contacts are provided by D255, D257, and S261. An intrachain disulfide couples C263 to C276. N306 carries an N-linked (GlcNAc...) asparagine glycan.

The protein belongs to the ficolin lectin family. Homotrimer. Interacts with elastin. Interacts with MASP1 and MASP2.

The protein resides in the secreted. Functionally, may function in innate immunity through activation of the lectin complement pathway. Calcium-dependent and GlcNAc-binding lectin. This is Ficolin-2 (Fcn2) from Rattus norvegicus (Rat).